The following is a 1241-amino-acid chain: Dinoflagellate luciferase (1241 aa).

Luciferase regions lie at residues 114-465, 491-842, and 868-1218; these read KTGL…IKRD, DQGF…TKRD, and EKGF…KKRD.

Belongs to the calycin superfamily. Luciferase family.

Its subcellular location is the cytoplasmic vesicle. The enzyme catalyses dinoflagellate luciferin + O2 = oxidized dinoflagellate luciferin + hnu + H2O + H(+). With respect to regulation, regulated by pH: upon acidification, at a pH of 6.3, dinoflagellate luciferin is released from luciferin-binding protein LBP, allowing the interaction between Dinoflagellate luciferase and its substrate luciferin. Emits blue light flashes with a wavelength of 475 nm during the night phase. The polypeptide is Dinoflagellate luciferase (Lingulodinium polyedra (Dinoflagellate)).